We begin with the raw amino-acid sequence, 511 residues long: Histidine ammonia-lyase (511 aa).

Residues 142 to 144 (ASG) constitute a cross-link (5-imidazolinone (Ala-Gly)). The residue at position 143 (Ser-143) is a 2,3-didehydroalanine (Ser).

It belongs to the PAL/histidase family. In terms of processing, contains an active site 4-methylidene-imidazol-5-one (MIO), which is formed autocatalytically by cyclization and dehydration of residues Ala-Ser-Gly.

The protein localises to the cytoplasm. The catalysed reaction is L-histidine = trans-urocanate + NH4(+). It functions in the pathway amino-acid degradation; L-histidine degradation into L-glutamate; N-formimidoyl-L-glutamate from L-histidine: step 1/3. In Rhizobium rhizogenes (strain K84 / ATCC BAA-868) (Agrobacterium radiobacter), this protein is Histidine ammonia-lyase.